Here is a 664-residue protein sequence, read N- to C-terminus: UvrABC system protein C (664 aa).

The GIY-YIG domain maps to 63-141; sequence LRPGVYRMYD…IKRYRPPYNI (79 aa). The UVR domain maps to 254–289; it reads THVQKKLVTAMEQASNDLNYELAAVYRDRLKALAFI.

Belongs to the UvrC family. As to quaternary structure, interacts with UvrB in an incision complex.

It is found in the cytoplasm. Its function is as follows. The UvrABC repair system catalyzes the recognition and processing of DNA lesions. UvrC both incises the 5' and 3' sides of the lesion. The N-terminal half is responsible for the 3' incision and the C-terminal half is responsible for the 5' incision. This Zymomonas mobilis subsp. mobilis (strain ATCC 31821 / ZM4 / CP4) protein is UvrABC system protein C.